Consider the following 446-residue polypeptide: UDP-N-acetylmuramoylalanine--D-glutamate ligase (446 aa).

Residue 116 to 122 participates in ATP binding; that stretch reads GSNGKTT.

It belongs to the MurCDEF family.

The protein resides in the cytoplasm. The enzyme catalyses UDP-N-acetyl-alpha-D-muramoyl-L-alanine + D-glutamate + ATP = UDP-N-acetyl-alpha-D-muramoyl-L-alanyl-D-glutamate + ADP + phosphate + H(+). It participates in cell wall biogenesis; peptidoglycan biosynthesis. Cell wall formation. Catalyzes the addition of glutamate to the nucleotide precursor UDP-N-acetylmuramoyl-L-alanine (UMA). The sequence is that of UDP-N-acetylmuramoylalanine--D-glutamate ligase from Marinobacter nauticus (strain ATCC 700491 / DSM 11845 / VT8) (Marinobacter aquaeolei).